Reading from the N-terminus, the 296-residue chain is tRNA dimethylallyltransferase (296 aa).

2-9 lines the ATP pocket; sequence GPTASGKT. 4-9 provides a ligand contact to substrate; sequence TASGKT. Interaction with substrate tRNA stretches follow at residues 27–30, 151–155, and 232–237; these read DSAL, QRLSR, and RCVGYR.

The protein belongs to the IPP transferase family. Monomer. It depends on Mg(2+) as a cofactor.

The enzyme catalyses adenosine(37) in tRNA + dimethylallyl diphosphate = N(6)-dimethylallyladenosine(37) in tRNA + diphosphate. Its function is as follows. Catalyzes the transfer of a dimethylallyl group onto the adenine at position 37 in tRNAs that read codons beginning with uridine, leading to the formation of N6-(dimethylallyl)adenosine (i(6)A). This Shewanella woodyi (strain ATCC 51908 / MS32) protein is tRNA dimethylallyltransferase.